We begin with the raw amino-acid sequence, 126 residues long: Large ribosomal subunit protein bL20c (126 aa).

It belongs to the bacterial ribosomal protein bL20 family.

The protein resides in the plastid. It localises to the chloroplast. Its function is as follows. Binds directly to 23S ribosomal RNA and is necessary for the in vitro assembly process of the 50S ribosomal subunit. It is not involved in the protein synthesizing functions of that subunit. In Lactuca sativa (Garden lettuce), this protein is Large ribosomal subunit protein bL20c.